We begin with the raw amino-acid sequence, 455 residues long: Killer cell immunoglobulin-like receptor 3DL2 (455 aa).

The first 21 residues, 1 to 21 (MSLTVVSMACVGFFLLQGAWP), serve as a signal peptide directing secretion. At 22–340 (LMGGQDKPFL…SKSGICRHLH (319 aa)) the chain is on the extracellular side. 3 consecutive Ig-like C2-type domains span residues 42-102 (GGHV…RPHS), 137-202 (GETV…VPHS), and 237-300 (GENV…FRAL). 2 cysteine pairs are disulfide-bonded: cysteine 49-cysteine 95 and cysteine 144-cysteine 195. N-linked (GlcNAc...) asparagine glycans are attached at residues asparagine 179, asparagine 239, asparagine 273, and asparagine 306. Cysteine 244 and cysteine 293 are oxidised to a cystine. A helical membrane pass occupies residues 341–360 (VLIGTSVVIFLFILLLFFLL). Residues 361-455 (YRWCSNKKNA…APQSGLEGVF (95 aa)) are Cytoplasmic-facing.

It belongs to the immunoglobulin superfamily. In terms of assembly, interacts with peptide-free HLA-F open conformer. As to expression, expressed in astrocytes.

It localises to the cell membrane. Receptor on natural killer (NK) cells and T cells for MHC class I molecules. Upon binding of peptide-free HLA-F open conformer, negatively regulates NK and T cell effector functions. Acts as a receptor on astrocytes for HLA-F. Through interaction with HLA-F, may protect motor neurons from astrocyte-induced toxicity. The chain is Killer cell immunoglobulin-like receptor 3DL2 from Homo sapiens (Human).